A 243-amino-acid chain; its full sequence is Transcription factor A, mitochondrial (243 aa).

The N-terminal 42 residues, 1 to 42, are a transit peptide targeting the mitochondrion; sequence MALFRGMWSVLKALGRTGVEMCAGCGGRIPSSISLVCIPKCF. A DNA-binding region (HMG box 1) is located at residues 49–117; it reads PKKPMSSYLR…AYKEAVSKYK (69 aa). Residues Ser-54, Ser-55, and Ser-60 each carry the phosphoserine; by PKA modification. Lys-66 carries the N6-succinyllysine modification. Phosphothreonine is present on Thr-121. The HMG box 2 DNA-binding region spans 154-218; sequence PKRPRSAYNI…RYDNEMKSWE (65 aa). Ser-159 bears the Phosphoserine; by PKA mark. Residue Ser-192 is modified to Phosphoserine.

As to quaternary structure, monomer; binds DNA as a monomer. Homodimer. Component of the mitochondrial transcription initiation complex, composed at least of TFB2M, TFAM and POLRMT. In this complex TFAM recruits POLRMT to the promoter whereas TFB2M induces structural changes in POLRMT to enable promoter opening and trapping of the DNA non-template strand. Upon metabolic stress, forms a complex composed of FOXO3, SIRT3, TFAM and POLRMT. Interacts with TFB1M and TFB2M. Interacts with CLPX; this enhances DNA-binding. Phosphorylation by PKA within the HMG box 1 impairs DNA binding and promotes degradation by the AAA+ Lon protease. The mitochondrial isoform is widely expressed while the nuclear isoform is testis-specific.

The protein resides in the mitochondrion. Its subcellular location is the mitochondrion matrix. It localises to the mitochondrion nucleoid. It is found in the nucleus. Functionally, binds to the mitochondrial light strand promoter and functions in mitochondrial transcription regulation. Component of the mitochondrial transcription initiation complex, composed at least of TFB2M, TFAM and POLRMT that is required for basal transcription of mitochondrial DNA. In this complex, TFAM recruits POLRMT to a specific promoter whereas TFB2M induces structural changes in POLRMT to enable promoter opening and trapping of the DNA non-template strand. Required for accurate and efficient promoter recognition by the mitochondrial RNA polymerase. Promotes transcription initiation from the HSP1 and the light strand promoter by binding immediately upstream of transcriptional start sites. Is able to unwind DNA. Bends the mitochondrial light strand promoter DNA into a U-turn shape via its HMG boxes. Required for maintenance of normal levels of mitochondrial DNA. May play a role in organizing and compacting mitochondrial DNA. In terms of biological role, may also function as a transcriptional activator or may have a structural role in the compaction of nuclear DNA during spermatogenesis. This Mus musculus (Mouse) protein is Transcription factor A, mitochondrial.